The primary structure comprises 191 residues: GDP-mannose pyrophosphatase (191 aa).

GDP-alpha-D-mannose contacts are provided by residues Tyr-17, 38–40 (KRE), Arg-67, and 85–87 (AGL). Residues 43–180 (DRGNGATILL…EIRDGKTVLL (138 aa)) form the Nudix hydrolase domain. Residues Ala-85, Glu-100, and Glu-104 each coordinate Mg(2+). Positions 86–106 (GLLDNDEPEVCIRKEAIEETG) match the Nudix box motif. Residues Glu-104, Glu-127, 150–151 (DE), and Lys-176 contribute to the GDP-alpha-D-mannose site. Glu-151 lines the Mg(2+) pocket.

Belongs to the Nudix hydrolase family. NudK subfamily. In terms of assembly, homodimer. Mg(2+) serves as cofactor.

The enzyme catalyses GDP-alpha-D-mannose + H2O = alpha-D-mannose 1-phosphate + GMP + 2 H(+). Its function is as follows. Nucleoside diphosphate sugar hydrolase that hydrolyzes GDP-mannose as its preferred substrate, yielding GMP and mannose-1-phosphate. In Shigella dysenteriae serotype 1 (strain Sd197), this protein is GDP-mannose pyrophosphatase (nudK).